The following is a 102-amino-acid chain: Small ribosomal subunit protein uS10 (102 aa).

This sequence belongs to the universal ribosomal protein uS10 family. As to quaternary structure, part of the 30S ribosomal subunit.

Functionally, involved in the binding of tRNA to the ribosomes. The polypeptide is Small ribosomal subunit protein uS10 (Leuconostoc citreum (strain KM20)).